The sequence spans 256 residues: Phosphoribosylaminoimidazole-succinocarboxamide synthase (256 aa).

The segment at 234 to 256 (KPQKPAAAKKKAPVSKKTVKRTR) is disordered. Over residues 240–256 (AAKKKAPVSKKTVKRTR) the composition is skewed to basic residues.

It belongs to the SAICAR synthetase family.

It catalyses the reaction 5-amino-1-(5-phospho-D-ribosyl)imidazole-4-carboxylate + L-aspartate + ATP = (2S)-2-[5-amino-1-(5-phospho-beta-D-ribosyl)imidazole-4-carboxamido]succinate + ADP + phosphate + 2 H(+). It participates in purine metabolism; IMP biosynthesis via de novo pathway; 5-amino-1-(5-phospho-D-ribosyl)imidazole-4-carboxamide from 5-amino-1-(5-phospho-D-ribosyl)imidazole-4-carboxylate: step 1/2. The chain is Phosphoribosylaminoimidazole-succinocarboxamide synthase from Methanoregula boonei (strain DSM 21154 / JCM 14090 / 6A8).